The chain runs to 292 residues: NAD kinase (292 aa).

Residue D73 is the Proton acceptor of the active site. Residues D73–G74, N147–E148, H158, R175, D177, T188–S193, and Q247 each bind NAD(+).

This sequence belongs to the NAD kinase family. It depends on a divalent metal cation as a cofactor.

The protein localises to the cytoplasm. It carries out the reaction NAD(+) + ATP = ADP + NADP(+) + H(+). Functionally, involved in the regulation of the intracellular balance of NAD and NADP, and is a key enzyme in the biosynthesis of NADP. Catalyzes specifically the phosphorylation on 2'-hydroxyl of the adenosine moiety of NAD to yield NADP. The polypeptide is NAD kinase (Serratia proteamaculans (strain 568)).